A 127-amino-acid chain; its full sequence is Large ribosomal subunit protein bL12 (127 aa).

Belongs to the bacterial ribosomal protein bL12 family. Homodimer. Part of the ribosomal stalk of the 50S ribosomal subunit. Forms a multimeric L10(L12)X complex, where L10 forms an elongated spine to which 2 to 4 L12 dimers bind in a sequential fashion. Binds GTP-bound translation factors.

Forms part of the ribosomal stalk which helps the ribosome interact with GTP-bound translation factors. Is thus essential for accurate translation. The polypeptide is Large ribosomal subunit protein bL12 (Rhizobium etli (strain ATCC 51251 / DSM 11541 / JCM 21823 / NBRC 15573 / CFN 42)).